The following is a 376-amino-acid chain: Protein STRICTOSIDINE SYNTHASE-LIKE 2 (376 aa).

The first 23 residues, 1–23 (MMKLLLVVATSVALIFSVTDLSG), serve as a signal peptide directing secretion. Asn-79 and Asn-244 each carry an N-linked (GlcNAc...) asparagine glycan.

It belongs to the strictosidine synthase family.

It localises to the vacuole. This Arabidopsis thaliana (Mouse-ear cress) protein is Protein STRICTOSIDINE SYNTHASE-LIKE 2.